We begin with the raw amino-acid sequence, 157 residues long: Protein Smg (157 aa).

It belongs to the Smg family.

The protein is Protein Smg of Yersinia pestis (strain Pestoides F).